The following is a 358-amino-acid chain: HLA class I histocompatibility antigen, alpha chain E (358 aa).

The first 21 residues, 1–21 (MVDGTLLLLLSEALALTQTWA), serve as a signal peptide directing secretion. Residues 22 to 111 (GSHSLKYFHT…LRGYYNQSEA (90 aa)) form an alpha-1 region. Topologically, residues 22–305 (GSHSLKYFHT…KPASQPTIPI (284 aa)) are extracellular. Positions 28, 84, 87, 98, and 105 each coordinate a peptide antigen. Asn107 is a glycosylation site (N-linked (GlcNAc...) asparagine). The interval 112 to 203 (GSHTLQWMHG…EKGKETLLHL (92 aa)) is alpha-2. A disulfide bridge links Cys122 with Cys185. A peptide antigen is bound by residues Ser164, Lys167, Gln177, Tyr180, and Tyr192. Residues 204 to 295 (EPPKTHVTHH…GLPEPVTLRW (92 aa)) form an alpha-3 region. An Ig-like C1-type domain is found at 206-294 (PKTHVTHHPI…EGLPEPVTLR (89 aa)). Cys224 and Cys280 are joined by a disulfide. Positions 296–305 (KPASQPTIPI) are connecting peptide. A helical transmembrane segment spans residues 306-329 (VGIIAGLVLLGSVVSGAVVAAVIW). At 330–358 (RKKSSGGKGGSYSKAEWSDSAQGSESHSL) the chain is on the cytoplasmic side. The tract at residues 333–358 (SSGGKGGSYSKAEWSDSAQGSESHSL) is disordered. Residues 348 to 358 (DSAQGSESHSL) are compositionally biased toward polar residues. The residue at position 353 (Ser353) is a Phosphoserine.

The protein belongs to the MHC class I family. As to quaternary structure, forms a heterotrimer with B2M and a self- or a pathogen-derived peptide (peptide-bound HLA-E-B2M). Similarly to MHC class Ia assembly, HLA-E-B2M heterodimer interacts with components of the antigen processing machinery TAPBP and TAP1-TAP2 complex; this interaction is required for peptide loading and translocation to the cell surface. Interacts with CALCR; this interaction is required for appropriate folding. The optimum binding peptide is a nonamer (VL9) that is primarily derived from amino-acid residues 3-11 of the signal sequences of most HLA-A, -B, -C and -G molecules. The VL9 peptide anchors to five main sites in the peptide-binding groove of HLA-E. Peptide-bound HLA-E-B2M complex interacts with KLRD1-KLRC1 receptor on NK cells. Binds with lower affinity to activating KLRD1-KLRC2. The common subunit KLRC1 plays a prominent role in directly interacting with HLA-E. Peptide-bound HLA-E-B2M interacts with the alpha-beta TCR on unconventional CD8+ T cells. Peptide-free HLA-E interacts with HLA-F-B2M complex; this interaction may regulate the intracellular trafficking and the stability of peptide-free MHC class I open conformers (OCs). N-glycosylated. Post-translationally, the soluble form (sHLA-E) can be partly produced by proteolytic cleavage at the cell surface (shedding) by a matrix metalloproteinase. Alternative splicing is also suggested as a mechanism for generation of sHLA-E, although it remains to be proved. In terms of tissue distribution, expressed in secretory endometrial cells during pregnancy (at protein level). The expression in nonlymphoid tissues is restricted to endothelial cells from all types of vessels, including arteries, veins, capillaries, and lymphatics (at protein level). In lymphoid organs, it is mainly expressed in endothelial venules, B and T cells, monocytes, macrophages, NK cells and megakaryocytes (at protein level).

The protein resides in the cell membrane. The protein localises to the golgi apparatus membrane. It localises to the secreted. Non-classical major histocompatibility class Ib molecule involved in immune self-nonself discrimination. In complex with B2M/beta-2-microglobulin binds nonamer self-peptides derived from the signal sequence of classical MHC class Ia molecules (VL9 peptides - VMAPRT[V/L][L/V/I/F]L). Peptide-bound HLA-E-B2M heterotrimeric complex primarily functions as a ligand for natural killer (NK) cell inhibitory receptor KLRD1-KLRC1, enabling NK cells to monitor the expression of other MHC class I molecules in healthy cells and to tolerate self. Upon cellular stress, preferentially binds signal sequence-derived peptides from stress-induced chaperones and is no longer recognized by NK cell inhibitory receptor KLRD1-KLRC1, resulting in impaired protection from NK cells. Binds signal sequence-derived peptides from non-classical MHC class Ib HLA-G molecules and acts as a ligand for NK cell activating receptor KLRD1-KLRC2, likely playing a role in the generation and effector functions of adaptive NK cells and in maternal-fetal tolerance during pregnancy. Besides self-peptides, can also bind and present pathogen-derived peptides conformationally similar to VL9 peptides to alpha-beta T cell receptor (TCR) on unconventional CD8-positive cytotoxic T cells, ultimately triggering antimicrobial immune response. Presents HIV gag peptides (immunodominant KAFSPEVIPMF and subdominant KALGPAATL epitopes) predominantly to CD8-positive T cell clones expressing a TRAV17-containing TCR, triggering HLA-E-restricted T cell responses. Presents mycobacterial peptides to HLA-E-restricted CD8-positive T cells eliciting both cytotoxic and immunoregulatory functions. Functionally, (Microbial infection) Viruses like human cytomegalovirus have evolved an escape mechanism whereby virus-induced down-regulation of host MHC class I molecules is coupled to the binding of viral peptides to HLA-E, restoring HLA-E expression and inducing HLA-E-dependent NK cell immune tolerance to infected cells. In terms of biological role, (Microbial infection) May bind HIV-1 gag/Capsid protein p24-derived peptide (AISPRTLNA) on infected cells and may inhibit NK cell cytotoxicity, a mechanism that allows HIV-1 to escape immune recognition. Its function is as follows. (Microbial infection) Upon SARS-CoV-2 infection, may contribute to functional exhaustion of cytotoxic NK cells and CD8-positive T cells. Binds SARS-CoV-2 S/Spike protein S1-derived peptide (LQPRTFLL) expressed on the surface of lung epithelial cells, inducing NK cell exhaustion and dampening of antiviral immune surveillance. This chain is HLA class I histocompatibility antigen, alpha chain E, found in Homo sapiens (Human).